Reading from the N-terminus, the 915-residue chain is Alpha-xylosidase 1 (915 aa).

A signal peptide spans 1–27 (MASSSSSLAFSLSLLLALILCFSPTQS). 3 N-linked (GlcNAc...) asparagine glycosylation sites follow: N153, N304, and N375. Catalysis depends on residues D440 and E443. 2 N-linked (GlcNAc...) asparagine glycosylation sites follow: N476 and N490. Catalysis depends on D563, which acts as the Proton donor. N-linked (GlcNAc...) asparagine glycosylation is found at N819, N888, and N907.

Belongs to the glycosyl hydrolase 31 family. Expressed in roots, stems, leaves, flowers and siliques. Expressed in cell types undergoing cell wall modifications, including trichomes, vasculature, stomata, and elongating anther filaments. Not detected in pollen.

It localises to the secreted. The protein localises to the cell wall. Its subcellular location is the extracellular space. It is found in the apoplast. It catalyses the reaction Hydrolysis of terminal, non-reducing alpha-D-xylose residues with release of alpha-D-xylose.. Its function is as follows. Glycoside hydrolase releasing xylosyl residues from xyloglucan oligosaccharides at the non-reducing end. Has alpha-xylosidase activity against xylan oligosaccharides. Also has alpha-glucosidase activity against p-nitrophenyl-alpha-D-glucopyranoside. No activity against p-nitrophenyl-D-xyloside. The chain is Alpha-xylosidase 1 from Arabidopsis thaliana (Mouse-ear cress).